The sequence spans 683 residues: MIDQYKHKQLQIGLVSPQQIKAWAKKILPNGEVVGEVTRPSTFHYKTDKPEKDGLFCERIFGPIKSGICACGNSRASVAENEDERFCQKCGVEFVDSRIRRYQMGYIKLACPVTHVWYLKGLPSYIANLLDKPLKKLEGLVYGDFSFARPSAKKPTFLRLRGLFEDEISSCNHSISPFFSTPGFATFRNREIATGAGAIREQLADLDLRIIIENSLVEWKELEDEGYSGDEWEDRKRRIRKVFLIRRMQLAKHFIQTNVEPEWMVLCLLPVLPPELRPIVYRSGDKVVTSDINELYKRVIRRNNNLAYLLKRSELAPADLVMCQEKLVQEAVDTLLDSGSRGQPMRDGHNKVYKSLSDVIEGKEGRFRETLLGKRVDYSGRSVIVVGPSLSLHQCGLPLEIAIKLFQLFVIRDLITKRATSNVRIAKRKIWEKEPIVWEILQEVMRGHPVLLNRAPTLHRLGIQAFQPTLVEGRTICLHPLVCKGFNADFDGDQMAVHLPLSLEAQAEARLLMFSHMNLLSPAIGDPICVPTQDMLIGLYVLTIGNRRGICANRYNSCGNSPNKKINYNNNNYYKYTKDKEPHFSSSYDALGAYRQKRIGLNSPLWLRWKLDQRIVGSREVPIEVQYESFGTYHEIYAHYLVVGNRKKEIRSIYIRTTLGHISFYREIEEAVQGFSRAYSYTI.

Zn(2+)-binding residues include Cys-69, Cys-71, Cys-87, and Cys-90. 3 residues coordinate Mg(2+): Asp-489, Asp-491, and Asp-493.

Belongs to the RNA polymerase beta' chain family. RpoC1 subfamily. As to quaternary structure, in plastids the minimal PEP RNA polymerase catalytic core is composed of four subunits: alpha, beta, beta', and beta''. When a (nuclear-encoded) sigma factor is associated with the core the holoenzyme is formed, which can initiate transcription. Mg(2+) is required as a cofactor. Requires Zn(2+) as cofactor.

It is found in the plastid. Its subcellular location is the chloroplast. It carries out the reaction RNA(n) + a ribonucleoside 5'-triphosphate = RNA(n+1) + diphosphate. In terms of biological role, DNA-dependent RNA polymerase catalyzes the transcription of DNA into RNA using the four ribonucleoside triphosphates as substrates. The polypeptide is DNA-directed RNA polymerase subunit beta' (Saccharum hybrid (Sugarcane)).